A 207-amino-acid polypeptide reads, in one-letter code: Cytochrome c biogenesis ATP-binding export protein CcmA (207 aa).

The 203-residue stretch at 2 to 204 folds into the ABC transporter domain; sequence LECENLSCTR…TTIDIRNFNR (203 aa). 34–41 contributes to the ATP binding site; that stretch reads GPNGSGKT.

It belongs to the ABC transporter superfamily. CcmA exporter (TC 3.A.1.107) family. As to quaternary structure, the complex is composed of two ATP-binding proteins (CcmA) and two transmembrane proteins (CcmB).

It is found in the cell membrane. It catalyses the reaction heme b(in) + ATP + H2O = heme b(out) + ADP + phosphate + H(+). In terms of biological role, part of the ABC transporter complex CcmAB involved in the biogenesis of c-type cytochromes; once thought to export heme, this seems not to be the case, but its exact role is uncertain. Responsible for energy coupling to the transport system. The polypeptide is Cytochrome c biogenesis ATP-binding export protein CcmA (Wolbachia pipientis wMel).